A 514-amino-acid chain; its full sequence is RNA polymerase sigma factor SigA (514 aa).

The segment covering 135 to 159 has biased composition (basic residues); the sequence is AAKKATAKKAAAKKTTAKKTAAKKS. The tract at residues 135–205 is disordered; that stretch reads AAKKATAKKA…SDDDEDDAPA (71 aa). The interval 281 to 351 is sigma-70 factor domain-2; that stretch reads LLEANLRLVV…TRAMADQART (71 aa). Positions 305–308 match the Interaction with polymerase core subunit RpoC motif; it reads DLIQ. Positions 360 to 436 are sigma-70 factor domain-3; sequence EVINKLARVQ…DSEAVVPADA (77 aa). The tract at residues 449–502 is sigma-70 factor domain-4; it reads VLDTLSEREAGVVSMRFGLTDGQPKTLDEIGKVYGVTRERIRQIESKTMSKLRH. The segment at residues 475–494 is a DNA-binding region (H-T-H motif); sequence LDEIGKVYGVTRERIRQIES.

This sequence belongs to the sigma-70 factor family. RpoD/SigA subfamily. As to quaternary structure, interacts transiently with the RNA polymerase catalytic core.

The protein localises to the cytoplasm. In terms of biological role, sigma factors are initiation factors that promote the attachment of RNA polymerase to specific initiation sites and are then released. This sigma factor is the primary sigma factor during exponential growth. The sequence is that of RNA polymerase sigma factor SigA from Streptomyces griseus.